We begin with the raw amino-acid sequence, 287 residues long: 4-hydroxybenzoate octaprenyltransferase (287 aa).

The next 6 helical transmembrane spans lie at 41–61, 89–109, 133–153, 158–178, 202–224, and 266–286; these read WPLL…GCAM, WEAV…ILPL, FFAI…PMAF, DTVP…SVAY, FGRF…YVWI, and HNNW…LLAG.

It belongs to the UbiA prenyltransferase family. It depends on Mg(2+) as a cofactor.

Its subcellular location is the cell inner membrane. The enzyme catalyses all-trans-octaprenyl diphosphate + 4-hydroxybenzoate = 4-hydroxy-3-(all-trans-octaprenyl)benzoate + diphosphate. It functions in the pathway cofactor biosynthesis; ubiquinone biosynthesis. Functionally, catalyzes the prenylation of para-hydroxybenzoate (PHB) with an all-trans polyprenyl group. Mediates the second step in the final reaction sequence of ubiquinone-8 (UQ-8) biosynthesis, which is the condensation of the polyisoprenoid side chain with PHB, generating the first membrane-bound Q intermediate 3-octaprenyl-4-hydroxybenzoate. The chain is 4-hydroxybenzoate octaprenyltransferase from Burkholderia orbicola (strain MC0-3).